We begin with the raw amino-acid sequence, 230 residues long: Protein FAM3A (230 aa).

The N-terminal stretch at 1–33 (MRLAGPLRIVVLVVSVGVTWIVVSILLGGPGSG) is a signal peptide. 2 cysteine pairs are disulfide-bonded: Cys-59-Cys-87 and Cys-65-Cys-222. In terms of domain architecture, GG-type lectin spans 68–226 (EHLAFRVVSG…LEMEGCIPRR (159 aa)).

The protein belongs to the FAM3 family. In terms of tissue distribution, in similar amounts in testis, pancreas, adrenal, placenta, brain, fetal brain, liver, kidney, skeletal muscle and heart.

It is found in the secreted. Functionally, may act as a defensin against invading fungal microorganisms. The polypeptide is Protein FAM3A (FAM3A) (Homo sapiens (Human)).